The primary structure comprises 290 residues: Shikimate kinase (290 aa).

81 to 91 (PIASGLKSSSA) contacts ATP.

This sequence belongs to the GHMP kinase family. Archaeal shikimate kinase subfamily.

Its subcellular location is the cytoplasm. It carries out the reaction shikimate + ATP = 3-phosphoshikimate + ADP + H(+). The protein operates within metabolic intermediate biosynthesis; chorismate biosynthesis; chorismate from D-erythrose 4-phosphate and phosphoenolpyruvate: step 5/7. The polypeptide is Shikimate kinase (Methanocella arvoryzae (strain DSM 22066 / NBRC 105507 / MRE50)).